Consider the following 267-residue polypeptide: Glutamate 5-kinase (267 aa).

Lys-14 is a binding site for ATP. Ser-54, Asp-141, and Asn-157 together coordinate substrate. ATP contacts are provided by residues 177 to 178 and 219 to 225; these read SD and TGGMMSK.

It belongs to the glutamate 5-kinase family.

It localises to the cytoplasm. The catalysed reaction is L-glutamate + ATP = L-glutamyl 5-phosphate + ADP. It participates in amino-acid biosynthesis; L-proline biosynthesis; L-glutamate 5-semialdehyde from L-glutamate: step 1/2. Catalyzes the transfer of a phosphate group to glutamate to form L-glutamate 5-phosphate. This is Glutamate 5-kinase from Streptococcus thermophilus.